A 333-amino-acid chain; its full sequence is MTTVTVTTEVPSSGKTEDGHVFCDSSSAHIIEETEYVRQMRTTLEKIRNHMFKEKEGCGNARHKLDAEGSGNIQNGSDSTTDPTCLDLLMENMRRKDQQLLEMNRENEVLQIKLEASREAGAAALRNVAQRLFDNYQTQAGDLEKKHEGRKHLLQVNNLEKEQALKGSAESLNLLSEKLEEKHGQIVGLENRVQRMENEKKTLLEKKLRLESKLFQLKSNAANPKSCQDLQTEISILQEQISHLQFVIHSQHQNLRSIIQEMEGLKNTLKEQDTKIENLKEKVTVLEAQNKELKTRVAHWTETPRTLVSKAVSTSELKTEGASPYLMLIRLRK.

Coiled-coil stretches lie at residues 86-120 and 160-302; these read LDLLMENMRRKDQQLLEMNRENEVLQIKLEASREA and EKEQ…HWTE.

Interacts with CEP170.

It localises to the cytoplasm. It is found in the cytoskeleton. The protein localises to the microtubule organizing center. Its subcellular location is the centrosome. The protein resides in the centriole. Functionally, centriolar protein required for centriole subdistal appendage assembly and microtubule anchoring in interphase cells. Together with CCDC120, cooperate with subdistal appendage components ODF2, NIN and CEP170 for hierarchical subdistal appendage assembly. The protein is Coiled-coil domain-containing protein 68 (Ccdc68) of Mus musculus (Mouse).